The following is a 255-amino-acid chain: Type III pantothenate kinase (255 aa).

Residue 6 to 13 (DVGNTNIV) coordinates ATP. Residues Tyr-100 and 107-110 (GADR) each bind substrate. Asp-109 (proton acceptor) is an active-site residue. Position 129 (Asp-129) interacts with K(+). Thr-132 provides a ligand contact to ATP. Residue Thr-184 coordinates substrate.

It belongs to the type III pantothenate kinase family. Homodimer. NH4(+) serves as cofactor. K(+) is required as a cofactor.

It localises to the cytoplasm. It catalyses the reaction (R)-pantothenate + ATP = (R)-4'-phosphopantothenate + ADP + H(+). The protein operates within cofactor biosynthesis; coenzyme A biosynthesis; CoA from (R)-pantothenate: step 1/5. In terms of biological role, catalyzes the phosphorylation of pantothenate (Pan), the first step in CoA biosynthesis. The chain is Type III pantothenate kinase from Caldanaerobacter subterraneus subsp. tengcongensis (strain DSM 15242 / JCM 11007 / NBRC 100824 / MB4) (Thermoanaerobacter tengcongensis).